The following is a 193-amino-acid chain: Crossover junction endodeoxyribonuclease RuvC (193 aa).

Residues aspartate 7, glutamate 68, and aspartate 141 contribute to the active site. 3 residues coordinate Mg(2+): aspartate 7, glutamate 68, and aspartate 141.

This sequence belongs to the RuvC family. As to quaternary structure, homodimer which binds Holliday junction (HJ) DNA. The HJ becomes 2-fold symmetrical on binding to RuvC with unstacked arms; it has a different conformation from HJ DNA in complex with RuvA. In the full resolvosome a probable DNA-RuvA(4)-RuvB(12)-RuvC(2) complex forms which resolves the HJ. Mg(2+) serves as cofactor.

The protein localises to the cytoplasm. The enzyme catalyses Endonucleolytic cleavage at a junction such as a reciprocal single-stranded crossover between two homologous DNA duplexes (Holliday junction).. Its function is as follows. The RuvA-RuvB-RuvC complex processes Holliday junction (HJ) DNA during genetic recombination and DNA repair. Endonuclease that resolves HJ intermediates. Cleaves cruciform DNA by making single-stranded nicks across the HJ at symmetrical positions within the homologous arms, yielding a 5'-phosphate and a 3'-hydroxyl group; requires a central core of homology in the junction. The consensus cleavage sequence is 5'-(A/T)TT(C/G)-3'. Cleavage occurs on the 3'-side of the TT dinucleotide at the point of strand exchange. HJ branch migration catalyzed by RuvA-RuvB allows RuvC to scan DNA until it finds its consensus sequence, where it cleaves and resolves the cruciform DNA. The polypeptide is Crossover junction endodeoxyribonuclease RuvC (Bifidobacterium adolescentis (strain ATCC 15703 / DSM 20083 / NCTC 11814 / E194a)).